Here is a 377-residue protein sequence, read N- to C-terminus: Carbamoyl phosphate synthase small chain (377 aa).

The interval 1 to 186 is CPSase; it reads MNTPALLVLA…LGKGFVTPDK (186 aa). L-glutamine-binding residues include S47, G238, and G240. The Glutamine amidotransferase type-1 domain occupies 190–377; it reads HVVAYDFGVK…IGNMKAAKQA (188 aa). C266 serves as the catalytic Nucleophile. Residues L267, Q270, N308, G310, and F311 each contribute to the L-glutamine site. Active-site residues include H350 and E352.

Belongs to the CarA family. Composed of two chains; the small (or glutamine) chain promotes the hydrolysis of glutamine to ammonia, which is used by the large (or ammonia) chain to synthesize carbamoyl phosphate. Tetramer of heterodimers (alpha,beta)4.

The catalysed reaction is hydrogencarbonate + L-glutamine + 2 ATP + H2O = carbamoyl phosphate + L-glutamate + 2 ADP + phosphate + 2 H(+). The enzyme catalyses L-glutamine + H2O = L-glutamate + NH4(+). It participates in amino-acid biosynthesis; L-arginine biosynthesis; carbamoyl phosphate from bicarbonate: step 1/1. The protein operates within pyrimidine metabolism; UMP biosynthesis via de novo pathway; (S)-dihydroorotate from bicarbonate: step 1/3. Small subunit of the glutamine-dependent carbamoyl phosphate synthetase (CPSase). CPSase catalyzes the formation of carbamoyl phosphate from the ammonia moiety of glutamine, carbonate, and phosphate donated by ATP, constituting the first step of 2 biosynthetic pathways, one leading to arginine and/or urea and the other to pyrimidine nucleotides. The small subunit (glutamine amidotransferase) binds and cleaves glutamine to supply the large subunit with the substrate ammonia. In Neisseria gonorrhoeae, this protein is Carbamoyl phosphate synthase small chain.